The primary structure comprises 478 residues: Protein nucleotidyltransferase YdiU (478 aa).

8 residues coordinate ATP: Gly-84, Gly-86, Arg-87, Lys-107, Asp-119, Gly-120, Arg-170, and Arg-177. Residue Asp-246 is the Proton acceptor of the active site. 2 residues coordinate Mg(2+): Asn-247 and Asp-256. Position 256 (Asp-256) interacts with ATP.

It belongs to the SELO family. Mg(2+) is required as a cofactor. Mn(2+) serves as cofactor.

The catalysed reaction is L-seryl-[protein] + ATP = 3-O-(5'-adenylyl)-L-seryl-[protein] + diphosphate. It catalyses the reaction L-threonyl-[protein] + ATP = 3-O-(5'-adenylyl)-L-threonyl-[protein] + diphosphate. The enzyme catalyses L-tyrosyl-[protein] + ATP = O-(5'-adenylyl)-L-tyrosyl-[protein] + diphosphate. It carries out the reaction L-histidyl-[protein] + UTP = N(tele)-(5'-uridylyl)-L-histidyl-[protein] + diphosphate. The catalysed reaction is L-seryl-[protein] + UTP = O-(5'-uridylyl)-L-seryl-[protein] + diphosphate. It catalyses the reaction L-tyrosyl-[protein] + UTP = O-(5'-uridylyl)-L-tyrosyl-[protein] + diphosphate. In terms of biological role, nucleotidyltransferase involved in the post-translational modification of proteins. It can catalyze the addition of adenosine monophosphate (AMP) or uridine monophosphate (UMP) to a protein, resulting in modifications known as AMPylation and UMPylation. In Escherichia coli O1:K1 / APEC, this protein is Protein nucleotidyltransferase YdiU.